A 205-amino-acid polypeptide reads, in one-letter code: uncharacterized protein (205 aa).

Residues Gln-10–Asp-75 adopt a coiled-coil conformation. The segment at Met-108 to Phe-141 is disordered. Residues Pro-111–Phe-141 show a composition bias toward polar residues.

Belongs to the asfivirus K205R family.

The protein localises to the host cytoplasm. Its function is as follows. Induces host endoplasmic reticulum stress and consequently activates autophagy and NF-kappa-B signaling pathway. In turn, may induce autophagy-mediated STING1 degradation and innate immune evasion. This is an uncharacterized protein from Ornithodoros (relapsing fever ticks).